The sequence spans 1379 residues: DNA-directed RNA polymerase subunit beta (1379 aa).

The protein belongs to the RNA polymerase beta chain family. As to quaternary structure, in plastids the minimal PEP RNA polymerase catalytic core is composed of four subunits: alpha, beta, beta', and beta''. When a (nuclear-encoded) sigma factor is associated with the core the holoenzyme is formed, which can initiate transcription.

The protein localises to the plastid. It is found in the chloroplast. The enzyme catalyses RNA(n) + a ribonucleoside 5'-triphosphate = RNA(n+1) + diphosphate. In terms of biological role, DNA-dependent RNA polymerase catalyzes the transcription of DNA into RNA using the four ribonucleoside triphosphates as substrates. In Trieres chinensis (Marine centric diatom), this protein is DNA-directed RNA polymerase subunit beta.